We begin with the raw amino-acid sequence, 73 residues long: Conotoxin Gla(3)-TxVI (73 aa).

Positions 1-19 (MQKLIILLLVAAVLMSAQA) are cleaved as a signal peptide. A propeptide spanning residues 20–44 (VLQEKRPKEKIKFLSKRKTDAEKQQ) is cleaved from the precursor. Cystine bridges form between Cys-48–Cys-62, Cys-55–Cys-66, and Cys-61–Cys-71. 4-hydroxyproline is present on Pro-49. Glu-53 carries the 4-carboxyglutamate; partial modification. Pro-54 carries the post-translational modification 4-hydroxyproline. At Glu-60 the chain carries 4-carboxyglutamate. Trp-64 carries the post-translational modification 6'-bromotryptophan.

Belongs to the conotoxin O2 superfamily. Expressed by the venom duct.

It localises to the secreted. The polypeptide is Conotoxin Gla(3)-TxVI (Conus textile (Cloth-of-gold cone)).